The sequence spans 133 residues: Ribosome-binding factor A (133 aa).

The protein belongs to the RbfA family. Monomer. Binds 30S ribosomal subunits, but not 50S ribosomal subunits or 70S ribosomes.

It is found in the cytoplasm. In terms of biological role, one of several proteins that assist in the late maturation steps of the functional core of the 30S ribosomal subunit. Associates with free 30S ribosomal subunits (but not with 30S subunits that are part of 70S ribosomes or polysomes). Required for efficient processing of 16S rRNA. May interact with the 5'-terminal helix region of 16S rRNA. The chain is Ribosome-binding factor A from Chlamydia muridarum (strain MoPn / Nigg).